A 358-amino-acid chain; its full sequence is Putative inhibitor of apoptosis (358 aa).

BIR repeat units follow at residues 4 to 70 and 90 to 157; these read EKDR…CPFL and YAAR…CEYL. Zn(2+)-binding residues include Cys-127, Cys-130, His-147, and Cys-154. Residues 193 to 283 form the CARD domain; it reads EPPNDLSLIR…MLYKHLFVQQ (91 aa). The RING-type zinc finger occupies 311 to 346; it reads CKVCMDKEVSIVFIPCGHLVVCKDCAPSLRKCPICR.

The protein belongs to the IAP family.

This Sus scrofa (Pig) protein is Putative inhibitor of apoptosis (PIAP).